The sequence spans 125 residues: Succinate dehydrogenase assembly factor 3, mitochondrial (125 aa).

The transit peptide at 1 to 30 directs the protein to the mitochondrion; the sequence is MPGKHVSRVRALYRRILLLHRALPPDLKAL.

It belongs to the complex I LYR family. SDHAF3 subfamily. In terms of assembly, interacts with Sdhb within an Sdha-Sdhb subcomplex.

It localises to the mitochondrion matrix. Its function is as follows. Plays an essential role in the assembly of succinate dehydrogenase (SDH), an enzyme complex (also referred to as respiratory complex II) that is a component of both the tricarboxylic acid (TCA) cycle and the mitochondrial electron transport chain, and which couples the oxidation of succinate to fumarate with the reduction of ubiquinone (coenzyme Q) to ubiquinol. Promotes maturation of the iron-sulfur protein subunit Sdhb of the SDH catalytic dimer, protecting it from the deleterious effects of oxidants. May act together with SDHAF1. In Mus musculus (Mouse), this protein is Succinate dehydrogenase assembly factor 3, mitochondrial.